The primary structure comprises 62 residues: Large ribosomal subunit protein uL30 (62 aa).

Belongs to the universal ribosomal protein uL30 family. In terms of assembly, part of the 50S ribosomal subunit.

The sequence is that of Large ribosomal subunit protein uL30 from Cereibacter sphaeroides (strain ATCC 17029 / ATH 2.4.9) (Rhodobacter sphaeroides).